Reading from the N-terminus, the 225-residue chain is Peroxiredoxin-2E-2, chloroplastic (225 aa).

A chloroplast-targeting transit peptide spans 1–42 (MAAPTAAALSTLSTASVTSGKRFITSSFSLSFSSRPLATGVR). The Thioredoxin domain maps to 63–225 (IAVGDKLPDA…SSAEEMLKAL (163 aa)). Cys111 (cysteine sulfenic acid (-SOH) intermediate) is an active-site residue.

It belongs to the peroxiredoxin family. Prx5 subfamily. As to quaternary structure, monomer.

It is found in the plastid. The protein localises to the chloroplast stroma. It catalyses the reaction [glutaredoxin]-dithiol + a hydroperoxide = [glutaredoxin]-disulfide + an alcohol + H2O. In terms of biological role, thiol-specific peroxidase that catalyzes the reduction of hydrogen peroxide and organic hydroperoxides to water and alcohols, respectively. Plays a role in cell protection against oxidative stress by detoxifying peroxides. May be involved in chloroplast redox homeostasis. This chain is Peroxiredoxin-2E-2, chloroplastic (PRXIIE-2), found in Oryza sativa subsp. japonica (Rice).